The sequence spans 328 residues: Glutathionyl-hydroquinone reductase YqjG (328 aa).

Cys63 (nucleophile) is an active-site residue. Residues Trp96, 130–133, and 148–149 each bind glutathione; these read RVTV and ES. In terms of domain architecture, GST C-terminal spans 172–296; that stretch reads PPALQTKIDE…VNFDHIRNHY (125 aa). Tyr195 functions as the Proton donor/acceptor in the catalytic mechanism. Residues 203 to 311 form a dimerization region; sequence QEAYDEAVAK…TINPTGIISI (109 aa).

The protein belongs to the GST superfamily. Xi-class GSH transferase family. Homodimer.

It carries out the reaction 2-(glutathione-S-yl)-hydroquinone + glutathione = hydroquinone + glutathione disulfide. Functionally, catalyzes glutathione (GSH)-dependent reduction of glutathionyl-hydroquinones (GS-HQs) to the corresponding hydroquinones. Can use a variety of GS-HQs as substrates, such as GS-p-hydroquinone (GS-HQ), GS-hydroxy-p-hydroquinone (GS-HHQ), GS-methyl-p-hydroquinone (GS-MHQ), GS-menadiol, and GS-trichloro-p-hydroquinone (GS-TriCH). Also displays GSH-dependent disulfide-bond reduction activity toward HED (2-hydroxyethyl disulfide), and is able to catalyze DMA (dimethylarsinate) reduction. Exhibits no GSH transferase activity with 1-chloro-2,4-dinitrobenzene (CDNB). This Escherichia coli (strain K12) protein is Glutathionyl-hydroquinone reductase YqjG (yqjG).